The primary structure comprises 1330 residues: pre-mRNA 3' end processing protein WDR33 (1330 aa).

A2 is subject to N-acetylalanine. Phosphoserine is present on S7. The residue at position 46 (K46) is an N6-acetyllysine. WD repeat units lie at residues 117–156 (KVKCPVFVVRWTPEGRRLVTGASSGEFTLWNGLTFNFETI), 159–198 (AHDSPVRAMTWSHNDMWMLTADHGGYVKYWQSNMNNVKMF), 200–239 (AHKEAIREASFSPTDNKFATCSDDGTVRIWDFLRCHEERI), 242–283 (GHGA…SLAT), 286–325 (AHKNTVMEVKLNLNGNWLLTASRDHLCKLFDIRNLKEELQ), 329–369 (GHKK…EVGG), and 373–412 (AHEGMIWSLAWHPLGHILCSGSNDHTSKFWTRNRPGDKMR). Residues K526, K530, and K560 each participate in a glycyl lysine isopeptide (Lys-Gly) (interchain with G-Cter in SUMO2) cross-link. The segment at 566–1330 (QKQADQIQPP…GTSRGSGRGR (765 aa)) is disordered. The segment covering 588-607 (FSGQGPISQIPQGFQQPHPS) has biased composition (polar residues). Residues 617 to 769 (GPPGPQGQFR…GPASQGIQGP (153 aa)) enclose the Collagen-like domain. Residues 622-642 (QGQFRAPGPQGQMGPQGPPMH) are compositionally biased toward low complexity. Over residues 682 to 694 (PHGPLGPQGPPGP) the composition is skewed to pro residues. Low complexity-rich tracts occupy residues 695 to 706 (QGSSGPQGHMGP) and 725 to 750 (QGHMGPQGPPGTQGMQGPPGPRGMQG). The residue at position 776 (R776) is an Omega-N-methylarginine. Positions 848–863 (GPSGSQGQQGPPQGSL) are enriched in low complexity. R909 is modified (asymmetric dimethylarginine). The span at 926 to 935 (PGLGQQGAQG) shows a compositional bias: low complexity. Basic and acidic residues-rich tracts occupy residues 965–983 (SERRHEQSGGPEHGPDRGP) and 992–1027 (GPPDRRGSHPDFPDDFRPDDFHPDKRFGHRLREFEG). The residue at position 981 (R981) is an Omega-N-methylarginine. R1028 carries the post-translational modification Omega-N-methylarginine. Basic and acidic residues-rich tracts occupy residues 1049–1061 (PDHREFNEGDGRG) and 1071–1115 (EGRR…RGRD). Positions 1123–1133 (FGPEEGFDASD) are enriched in acidic residues. Basic and acidic residues-rich tracts occupy residues 1134–1143 (EAARGRDLRG), 1163–1211 (EFPR…RERS), and 1236–1253 (SEHREMEAQGGPSEDRGS). S1204 is subject to Phosphoserine. At R1256 the chain carries Omega-N-methylarginine. Over residues 1275-1287 (DGDHHDGYHRDEP) the composition is skewed to basic and acidic residues. The segment covering 1293–1323 (GSSSSSRGARSGSNWGRGSNMNSGPPRRGTS) has biased composition (low complexity). R1309 carries the post-translational modification Asymmetric dimethylarginine; alternate. Omega-N-methylarginine; alternate is present on R1309.

This sequence belongs to the WD repeat WDR33 family. In terms of assembly, component of the cleavage and polyadenylation specificity factor (CPSF) module of the pre-mRNA 3'-end processing complex. Interacts with CPSF3/CPSF73. Most highly expressed in testis.

It localises to the nucleus. In terms of biological role, essential for both cleavage and polyadenylation of pre-mRNA 3' ends. This chain is pre-mRNA 3' end processing protein WDR33 (Wdr33), found in Mus musculus (Mouse).